The following is a 152-amino-acid chain: SKP1-like protein 12 (152 aa).

The interaction with the F-box domain of F-box proteins stretch occupies residues isoleucine 94–glutamate 152.

The protein belongs to the SKP1 family. In terms of assembly, part of a SCF (SKP1-cullin-F-box) protein ligase complex. Interacts with ADO3/FKF1, COI1/FBL2, EBF1/FBL6, PP2B10, At3g61590 and At5g49610. Expressed in young seedlings, roots, leaves, floral stems, inflorescences, and siliques, with a slightly higher level in inflorescence than in other tissues.

Its subcellular location is the nucleus. It functions in the pathway protein modification; protein ubiquitination. Involved in ubiquitination and subsequent proteasomal degradation of target proteins. Together with CUL1, RBX1 and a F-box protein, it forms a SCF E3 ubiquitin ligase complex. The functional specificity of this complex depends on the type of F-box protein. In the SCF complex, it serves as an adapter that links the F-box protein to CUL1. Plays a role during early flowers reproductive development. In Arabidopsis thaliana (Mouse-ear cress), this protein is SKP1-like protein 12 (ASK12).